We begin with the raw amino-acid sequence, 332 residues long: Processive diacylglycerol alpha-glucosyltransferase (332 aa).

Belongs to the glycosyltransferase group 1 family. Glycosyltransferase 4 subfamily. The cofactor is Mg(2+).

The protein resides in the cell membrane. The catalysed reaction is a 1,2-diacyl-sn-glycerol + UDP-alpha-D-glucose = a 1,2-diacyl-3-O-(alpha-D-glucopyranosyl)-sn-glycerol + UDP + H(+). It catalyses the reaction a 1,2-diacyl-3-O-(alpha-D-glucopyranosyl)-sn-glycerol + UDP-alpha-D-glucose = a 1,2-diacyl-3-O-[alpha-D-glucosyl-(1-&gt; 2)-alpha-D-glucosyl]-sn-glycerol + UDP + H(+). Its pathway is glycolipid metabolism; diglucosyl-diacylglycerol biosynthesis. Activated by the negatively charged lipids phosphatidylglycerol (PG), cardiolipin (CL), nonbilayer-prone 1,3-DAG, 1,2-dioleoylphosphatidylglycerol (DOPG) and 1,2-dioleoylphosphatidylserine (DOPS). Inhibited by 1,2-diacyl-3-O-(alpha-D-galactopyranosyl)-sn-glycerol, 1,2-diacyl-3-O-[6-O-acyl(alpha-D-glucopyranosyl)]-sn-glycerol and 1,2-diacyl-3-O-[alpha-D-glucopyranosyl-(1-&gt;2)-O-(6-O-acyl-alpha-D-glucopyranosyl)]-sn-glycerol. Functionally, processive glucosyltransferase involved in the biosynthesis of both the non-bilayer-prone alpha-monoglucosyldiacylglycerol and the bilayer-forming membrane lipid alpha-diglucosyldiacylglycerol. These are major components for maintaining the anionic lipid surface charge density, for balancing the bilayer to non-bilayer phase equilibria and for keeping a constant lipid bilayer spontaneous curvature (curvature packing stress). Catalyzes the transfer of a glucosyl residue from UDP-Glc to diacylglycerol (DAG) acceptor to form the corresponding alpha-glucosyl-DAG (1,2-diacyl-3-O-(alpha-D-glucopyranosyl)-sn-glycerol), which then acts as acceptor to give alpha-diglucosyl-DAG product (3-O-(alpha-D-glucopyranosyl-alpha-(1-&gt;2)-D-glucopyranosyl)-1,2-diacyl-sn-glycerol). It can only use UDP-Glc as sugar donor. This is Processive diacylglycerol alpha-glucosyltransferase (dgs) from Acholeplasma laidlawii.